The primary structure comprises 224 residues: Phosphoribosylformylglycinamidine synthase subunit PurQ (224 aa).

Residues 2-224 (KVTILQFPGT…IKMLQGFLRA (223 aa)) form the Glutamine amidotransferase type-1 domain. Catalysis depends on Cys-86, which acts as the Nucleophile. Active-site residues include His-200 and Glu-202.

Part of the FGAM synthase complex composed of 1 PurL, 1 PurQ and 2 PurS subunits.

The protein resides in the cytoplasm. The catalysed reaction is N(2)-formyl-N(1)-(5-phospho-beta-D-ribosyl)glycinamide + L-glutamine + ATP + H2O = 2-formamido-N(1)-(5-O-phospho-beta-D-ribosyl)acetamidine + L-glutamate + ADP + phosphate + H(+). The enzyme catalyses L-glutamine + H2O = L-glutamate + NH4(+). It functions in the pathway purine metabolism; IMP biosynthesis via de novo pathway; 5-amino-1-(5-phospho-D-ribosyl)imidazole from N(2)-formyl-N(1)-(5-phospho-D-ribosyl)glycinamide: step 1/2. Functionally, part of the phosphoribosylformylglycinamidine synthase complex involved in the purines biosynthetic pathway. Catalyzes the ATP-dependent conversion of formylglycinamide ribonucleotide (FGAR) and glutamine to yield formylglycinamidine ribonucleotide (FGAM) and glutamate. The FGAM synthase complex is composed of three subunits. PurQ produces an ammonia molecule by converting glutamine to glutamate. PurL transfers the ammonia molecule to FGAR to form FGAM in an ATP-dependent manner. PurS interacts with PurQ and PurL and is thought to assist in the transfer of the ammonia molecule from PurQ to PurL. In Sulfurimonas denitrificans (strain ATCC 33889 / DSM 1251) (Thiomicrospira denitrificans (strain ATCC 33889 / DSM 1251)), this protein is Phosphoribosylformylglycinamidine synthase subunit PurQ.